The primary structure comprises 327 residues: Expansin-B7 (327 aa).

The N-terminal stretch at 1 to 30 (MAGRSRRRSFWSVGVAAALLCLLAAHGCSA) is a signal peptide. The disordered stretch occupies residues 30–88 (AKHHKPKPTPGGISGNASSSSSNSSTPSIPPPVAPTPTAPTPPIPSPGTGSSNGSSGGG). Residues 44-56 (GNASSSSSNSSTP) show a composition bias toward low complexity. Residues Asn45 and Asn52 are each glycosylated (N-linked (GlcNAc...) asparagine). The segment covering 57–75 (SIPPPVAPTPTAPTPPIPS) has biased composition (pro residues). The N-linked (GlcNAc...) asparagine glycan is linked to Asn82. An Expansin-like EG45 domain is found at 112-218 (GGACGFKNVN…RRVPCQYPGL (107 aa)). Intrachain disulfides connect Cys115–Cys143, Cys146–Cys213, and Cys151–Cys157. Residues 231–322 (VYMAILVEYE…DWQPNTVYSS (92 aa)) enclose the Expansin-like CBD domain. N-linked (GlcNAc...) asparagine glycosylation occurs at Asn298.

It belongs to the expansin family. Expansin B subfamily.

Its subcellular location is the secreted. It is found in the cell wall. It localises to the membrane. Functionally, may cause loosening and extension of plant cell walls by disrupting non-covalent bonding between cellulose microfibrils and matrix glucans. No enzymatic activity has been found. May be required for rapid internodal elongation in deepwater rice during submergence. This is Expansin-B7 (EXPB7) from Oryza sativa subsp. japonica (Rice).